Consider the following 255-residue polypeptide: Octanoyltransferase (255 aa).

A disordered region spans residues 1–21 (MCATPVSPSPESPRSAQAGAA). The region spanning 56–242 (FETSDEIWLV…SLIANIDGIP (187 aa)) is the BPL/LPL catalytic domain. Residues 96–103 (RGGQITYH), 173–175 (ALG), and 186–188 (GVS) each bind substrate. The active-site Acyl-thioester intermediate is C204.

It belongs to the LipB family.

The protein resides in the cytoplasm. The enzyme catalyses octanoyl-[ACP] + L-lysyl-[protein] = N(6)-octanoyl-L-lysyl-[protein] + holo-[ACP] + H(+). It functions in the pathway protein modification; protein lipoylation via endogenous pathway; protein N(6)-(lipoyl)lysine from octanoyl-[acyl-carrier-protein]: step 1/2. Its function is as follows. Catalyzes the transfer of endogenously produced octanoic acid from octanoyl-acyl-carrier-protein onto the lipoyl domains of lipoate-dependent enzymes. Lipoyl-ACP can also act as a substrate although octanoyl-ACP is likely to be the physiological substrate. The protein is Octanoyltransferase of Paraburkholderia phymatum (strain DSM 17167 / CIP 108236 / LMG 21445 / STM815) (Burkholderia phymatum).